The sequence spans 321 residues: tRNA U34 carboxymethyltransferase (321 aa).

Residues lysine 90, tryptophan 104, lysine 109, glycine 129, aspartate 151–threonine 153, isoleucine 180–glutamate 181, methionine 195, tyrosine 199, and arginine 314 each bind carboxy-S-adenosyl-L-methionine.

This sequence belongs to the class I-like SAM-binding methyltransferase superfamily. CmoB family. Homotetramer.

The enzyme catalyses carboxy-S-adenosyl-L-methionine + 5-hydroxyuridine(34) in tRNA = 5-carboxymethoxyuridine(34) in tRNA + S-adenosyl-L-homocysteine + H(+). Its function is as follows. Catalyzes carboxymethyl transfer from carboxy-S-adenosyl-L-methionine (Cx-SAM) to 5-hydroxyuridine (ho5U) to form 5-carboxymethoxyuridine (cmo5U) at position 34 in tRNAs. The polypeptide is tRNA U34 carboxymethyltransferase (Pasteurella multocida (strain Pm70)).